Consider the following 352-residue polypeptide: UDP-3-O-acylglucosamine N-acyltransferase (352 aa).

The active-site Proton acceptor is the His-246.

It belongs to the transferase hexapeptide repeat family. LpxD subfamily. As to quaternary structure, homotrimer.

It catalyses the reaction a UDP-3-O-[(3R)-3-hydroxyacyl]-alpha-D-glucosamine + a (3R)-hydroxyacyl-[ACP] = a UDP-2-N,3-O-bis[(3R)-3-hydroxyacyl]-alpha-D-glucosamine + holo-[ACP] + H(+). It participates in bacterial outer membrane biogenesis; LPS lipid A biosynthesis. Catalyzes the N-acylation of UDP-3-O-acylglucosamine using 3-hydroxyacyl-ACP as the acyl donor. Is involved in the biosynthesis of lipid A, a phosphorylated glycolipid that anchors the lipopolysaccharide to the outer membrane of the cell. This is UDP-3-O-acylglucosamine N-acyltransferase from Chlorobium luteolum (strain DSM 273 / BCRC 81028 / 2530) (Pelodictyon luteolum).